Here is a 108-residue protein sequence, read N- to C-terminus: UPF0235 protein RB8260 (108 aa).

Belongs to the UPF0235 family.

The chain is UPF0235 protein RB8260 from Rhodopirellula baltica (strain DSM 10527 / NCIMB 13988 / SH1).